The following is a 931-amino-acid chain: Aftiphilin (931 aa).

The tract at residues 1 to 49 is disordered; the sequence is MEPDIIRMYSSSPPPLDNGAEDDEEDEFGEFGGFSEVSPSGVGFVDFDT. The span at 19–29 shows a compositional bias: acidic residues; it reads GAEDDEEDEFG. The WXXF motif 1 motif lies at 28 to 31; that stretch reads FGEF. The segment covering 33–45 has biased composition (low complexity); that stretch reads GFSEVSPSGVGFV. Serine 151 is modified (phosphoserine). Residues 371-381 show a composition bias toward polar residues; sequence SVKTSDVNEIG. Positions 371–454 are disordered; the sequence is SVKTSDVNEI…PFVTSTQDSM (84 aa). At serine 395 the chain carries Phosphoserine. Residues 433 to 436 carry the WXXF motif 2 motif; that stretch reads FGDF. Positions 439-454 are enriched in polar residues; it reads ANGTTPPFVTSTQDSM. A WXXF motif 3 motif is present at residues 476-479; the sequence is FGEF. Disordered stretches follow at residues 494–561 and 599–636; these read TESD…SSAG and WQSQ…LQEP. Positions 516–530 are enriched in basic and acidic residues; the sequence is GGKDSKPDSKLKNGQ. Position 613 is a phosphothreonine (threonine 613). Low complexity predominate over residues 618–631; that stretch reads SVSSAASKGAVASG. The CLTCL1/Clathrin-binding signature appears at 712-714; sequence YQW. A clathrin-binding region spans residues 821-825; that stretch reads LLNLD.

Self-associates. Interacts with GGA1 (via GAE domain). Interacts with GGA3 (via GAE domain), AP1G1 (via GAE domain) and AP1G2 (via GAE domain). Component of the aftiphilin/p200/gamma-synergin complex, at least composed of AFTPH/aftiphilin, HEATR5B/p200a and SYNRG/gamma-synergin, which plays a role in the AP1G1/AP-1-mediated protein trafficking from early to recycling endosomes. Within the complex interacts with HEATR5B/p200a and SYNRG/gamma-synergin; the interactions are direct. Interacts with AP1G1/AP-1; the interaction is required to recruit AFTPH/aftiphilin to the perinuclear region of the cell. Interacts with CLTCL1/Clathrin.

The protein localises to the cytoplasm. Its subcellular location is the perinuclear region. It localises to the cytoplasmic vesicle. It is found in the clathrin-coated vesicle. Its function is as follows. Component of clathrin-coated vesicles. Component of the aftiphilin/p200/gamma-synergin complex, which plays roles in AP1G1/AP-1-mediated protein trafficking including the trafficking of transferrin from early to recycling endosomes, and the membrane trafficking of furin and the lysosomal enzyme cathepsin D between the trans-Golgi network (TGN) and endosomes. The protein is Aftiphilin (Aftph) of Mus musculus (Mouse).